Reading from the N-terminus, the 563-residue chain is Eukaryotic translation initiation factor 3 subunit D-1 (563 aa).

Positions 98–167 (VQKPPHQRGR…GPPPKMRESS (70 aa)) are disordered. Basic residues predominate over residues 100 to 121 (KPPHQRGRFRNMRNSRSGRGRN). Thr128 is subject to Phosphothreonine. An RNA gate region spans residues 291–305 (EFDLLTVNETSVEPP).

Belongs to the eIF-3 subunit D family. Component of the eukaryotic translation initiation factor 3 (eIF-3) complex. The eIF-3 complex interacts with pix.

Its subcellular location is the cytoplasm. Functionally, mRNA cap-binding component of the eukaryotic translation initiation factor 3 (eIF-3) complex, which is involved in protein synthesis of a specialized repertoire of mRNAs and, together with other initiation factors, stimulates binding of mRNA and methionyl-tRNAi to the 40S ribosome. The eIF-3 complex specifically targets and initiates translation of a subset of mRNAs involved in cell proliferation. In the eIF-3 complex, eif3d specifically recognizes and binds the 7-methylguanosine cap of a subset of mRNAs. The polypeptide is Eukaryotic translation initiation factor 3 subunit D-1 (Drosophila mojavensis (Fruit fly)).